Consider the following 430-residue polypeptide: Enolase (430 aa).

Position 163 (glutamine 163) interacts with (2R)-2-phosphoglycerate. The Proton donor role is filled by glutamate 205. Mg(2+) is bound by residues aspartate 242, glutamate 287, and aspartate 314. (2R)-2-phosphoglycerate-binding residues include lysine 339, arginine 368, serine 369, and lysine 390. The active-site Proton acceptor is the lysine 339.

Belongs to the enolase family. Requires Mg(2+) as cofactor.

It is found in the cytoplasm. The protein resides in the secreted. It localises to the cell surface. The catalysed reaction is (2R)-2-phosphoglycerate = phosphoenolpyruvate + H2O. Its pathway is carbohydrate degradation; glycolysis; pyruvate from D-glyceraldehyde 3-phosphate: step 4/5. In terms of biological role, catalyzes the reversible conversion of 2-phosphoglycerate (2-PG) into phosphoenolpyruvate (PEP). It is essential for the degradation of carbohydrates via glycolysis. The sequence is that of Enolase from Exiguobacterium sp. (strain ATCC BAA-1283 / AT1b).